A 160-amino-acid chain; its full sequence is Phosphopantetheine adenylyltransferase (160 aa).

Ser-10 lines the substrate pocket. ATP is bound by residues 10 to 11 (SF) and His-18. Lys-42, Thr-74, and Arg-88 together coordinate substrate. ATP contacts are provided by residues 89 to 91 (GLR), Glu-99, and 124 to 130 (FYYISSR).

The protein belongs to the bacterial CoaD family. In terms of assembly, homohexamer. Mg(2+) is required as a cofactor.

Its subcellular location is the cytoplasm. The catalysed reaction is (R)-4'-phosphopantetheine + ATP + H(+) = 3'-dephospho-CoA + diphosphate. Its pathway is cofactor biosynthesis; coenzyme A biosynthesis; CoA from (R)-pantothenate: step 4/5. Reversibly transfers an adenylyl group from ATP to 4'-phosphopantetheine, yielding dephospho-CoA (dPCoA) and pyrophosphate. The sequence is that of Phosphopantetheine adenylyltransferase from Bdellovibrio bacteriovorus (strain ATCC 15356 / DSM 50701 / NCIMB 9529 / HD100).